The following is a 240-amino-acid chain: Protein Thf1 (240 aa).

The stretch at 186 to 222 forms a coiled coil; that stretch reads KDLDLYRSNLEKVDQLLKVLEDAAEAERKKKEKQAAS. Positions 212-240 are disordered; the sequence is ERKKKEKQAASTTPAIEEAPVTTAESSES.

The protein belongs to the THF1 family.

In terms of biological role, may be involved in photosynthetic membrane biogenesis. In Synechocystis sp. (strain ATCC 27184 / PCC 6803 / Kazusa), this protein is Protein Thf1.